A 117-amino-acid polypeptide reads, in one-letter code: V-type sodium ATPase subunit F (117 aa).

The segment at 1-20 is disordered; it reads MARILTRIKEAEENNQKKEE. Basic and acidic residues predominate over residues 7–20; sequence RIKEAEENNQKKEE.

This sequence belongs to the V-ATPase G subunit family.

Functionally, involved in ATP-driven sodium extrusion. The protein is V-type sodium ATPase subunit F (ntpF) of Enterococcus hirae (strain ATCC 9790 / DSM 20160 / JCM 8729 / LMG 6399 / NBRC 3181 / NCIMB 6459 / NCDO 1258 / NCTC 12367 / WDCM 00089 / R).